A 326-amino-acid polypeptide reads, in one-letter code: Trans-L-3-hydroxyproline dehydratase (326 aa).

Catalysis depends on C80, which acts as the Proton acceptor. Substrate contacts are provided by residues 81 to 82, D241, and 246 to 247; these read GH and GS.

The protein belongs to the proline racemase family. As to quaternary structure, homodimer.

The enzyme catalyses trans-3-hydroxy-L-proline = 1-pyrroline-2-carboxylate + H2O. Catalyzes the dehydration of trans-3-hydroxy-L-proline to delta-1-pyrroline-2-carboxylate (Pyr2C). This chain is Trans-L-3-hydroxyproline dehydratase (l3hypdh), found in Saccoglossus kowalevskii (Acorn worm).